Reading from the N-terminus, the 466-residue chain is Phosphomethylpyrimidine synthase (466 aa).

Residues N80, M109, Y139, H175, 195-197 (SRG), 236-239 (DSLR), and E275 each bind substrate. Residue H279 participates in Zn(2+) binding. Y302 is a substrate binding site. H343 lines the Zn(2+) pocket. [4Fe-4S] cluster-binding residues include C423, C426, and C431.

This sequence belongs to the ThiC family. [4Fe-4S] cluster serves as cofactor.

It carries out the reaction 5-amino-1-(5-phospho-beta-D-ribosyl)imidazole + S-adenosyl-L-methionine = 4-amino-2-methyl-5-(phosphooxymethyl)pyrimidine + CO + 5'-deoxyadenosine + formate + L-methionine + 3 H(+). It functions in the pathway cofactor biosynthesis; thiamine diphosphate biosynthesis. In terms of biological role, catalyzes the synthesis of the hydroxymethylpyrimidine phosphate (HMP-P) moiety of thiamine from aminoimidazole ribotide (AIR) in a radical S-adenosyl-L-methionine (SAM)-dependent reaction. The polypeptide is Phosphomethylpyrimidine synthase (Prochlorococcus marinus (strain NATL1A)).